The chain runs to 267 residues: Translation initiation factor 2 subunit alpha (267 aa).

Residues 12–83 enclose the S1 motif domain; the sequence is GEIVMATVER…KRKYANLSLR (72 aa).

Belongs to the eIF-2-alpha family. In terms of assembly, heterotrimer composed of an alpha, a beta and a gamma chain.

EIF-2 functions in the early steps of protein synthesis by forming a ternary complex with GTP and initiator tRNA. This is Translation initiation factor 2 subunit alpha from Methanopyrus kandleri (strain AV19 / DSM 6324 / JCM 9639 / NBRC 100938).